A 180-amino-acid chain; its full sequence is Cytochrome b6-f complex subunit 4 (180 aa).

The next 3 membrane-spanning stretches (helical) occupy residues Leu36–Val56, Leu95–Glu115, and Thr131–Ile151.

Belongs to the cytochrome b family. PetD subfamily. As to quaternary structure, the 4 large subunits of the cytochrome b6-f complex are cytochrome b6, subunit IV (17 kDa polypeptide, petD), cytochrome f and the Rieske protein, while the 4 small subunits are petG, petL, petM and petN. The complex functions as a dimer.

The protein localises to the plastid. The protein resides in the chloroplast thylakoid membrane. Component of the cytochrome b6-f complex, which mediates electron transfer between photosystem II (PSII) and photosystem I (PSI), cyclic electron flow around PSI, and state transitions. This Pinus thunbergii (Japanese black pine) protein is Cytochrome b6-f complex subunit 4.